The primary structure comprises 265 residues: ATP synthase subunit a (265 aa).

6 helical membrane passes run 26–46, 88–108, 132–152, 168–188, 195–217, and 231–251; these read VHLD…FFFY, IGSL…IDLI, DISA…FYTI, PFNH…TLLA, FRLF…MYMA, and LIWA…FMML.

Belongs to the ATPase A chain family. As to quaternary structure, F-type ATPases have 2 components, CF(1) - the catalytic core - and CF(0) - the membrane proton channel. CF(1) has five subunits: alpha(3), beta(3), gamma(1), delta(1), epsilon(1). CF(0) has three main subunits: a(1), b(2) and c(9-12). The alpha and beta chains form an alternating ring which encloses part of the gamma chain. CF(1) is attached to CF(0) by a central stalk formed by the gamma and epsilon chains, while a peripheral stalk is formed by the delta and b chains.

Its subcellular location is the cell inner membrane. In terms of biological role, key component of the proton channel; it plays a direct role in the translocation of protons across the membrane. The chain is ATP synthase subunit a from Histophilus somni (strain 2336) (Haemophilus somnus).